A 144-amino-acid polypeptide reads, in one-letter code: D-aminoacyl-tRNA deacylase (144 aa).

The Gly-cisPro motif, important for rejection of L-amino acids motif lies at 136-137 (GP).

The protein belongs to the DTD family. As to quaternary structure, homodimer.

It localises to the cytoplasm. The enzyme catalyses glycyl-tRNA(Ala) + H2O = tRNA(Ala) + glycine + H(+). It carries out the reaction a D-aminoacyl-tRNA + H2O = a tRNA + a D-alpha-amino acid + H(+). Its function is as follows. An aminoacyl-tRNA editing enzyme that deacylates mischarged D-aminoacyl-tRNAs. Also deacylates mischarged glycyl-tRNA(Ala), protecting cells against glycine mischarging by AlaRS. Acts via tRNA-based rather than protein-based catalysis; rejects L-amino acids rather than detecting D-amino acids in the active site. By recycling D-aminoacyl-tRNA to D-amino acids and free tRNA molecules, this enzyme counteracts the toxicity associated with the formation of D-aminoacyl-tRNA entities in vivo and helps enforce protein L-homochirality. The protein is D-aminoacyl-tRNA deacylase of Corynebacterium efficiens (strain DSM 44549 / YS-314 / AJ 12310 / JCM 11189 / NBRC 100395).